The sequence spans 109 residues: Ubiquitin-related modifier 1 homolog (109 aa).

The residue at position 109 (Gly-109) is a 1-thioglycine. Gly-109 participates in a covalent cross-link: Glycyl lysine isopeptide (Gly-Lys) (interchain with K-? in acceptor proteins).

The protein belongs to the URM1 family. C-terminal thiocarboxylation occurs in 2 steps, it is first acyl-adenylated (-COAMP) via the hesA/moeB/thiF part of the MOCS3 homolog, then thiocarboxylated (-COSH) via the rhodanese domain of the MOCS3 homolog.

Its subcellular location is the cytoplasm. It functions in the pathway tRNA modification; 5-methoxycarbonylmethyl-2-thiouridine-tRNA biosynthesis. In terms of biological role, acts as a sulfur carrier required for 2-thiolation of mcm(5)S(2)U at tRNA wobble positions of cytosolic tRNA(Lys), tRNA(Glu) and tRNA(Gln). Serves as sulfur donor in tRNA 2-thiolation reaction by being thiocarboxylated (-COSH) at its C-terminus by MOCS3. The sulfur is then transferred to tRNA to form 2-thiolation of mcm(5)S(2)U. Also acts as a ubiquitin-like protein (UBL) that is covalently conjugated via an isopeptide bond to lysine residues of target proteins. The thiocarboxylated form serves as substrate for conjugation and oxidative stress specifically induces the formation of UBL-protein conjugates. This is Ubiquitin-related modifier 1 homolog from Culex quinquefasciatus (Southern house mosquito).